The primary structure comprises 501 residues: Cytochrome P450 90A4 (501 aa).

The chain crosses the membrane as a helical span at residues 2 to 22; sequence AAAALLLLAAAAAAVVVAMAL. Heme is bound at residue Cys-446.

This sequence belongs to the cytochrome P450 family. The cofactor is heme. Highly expressed in shoot apex and inflorenscence. Expressed in roots, stems, leaf blades and leaf sheaths.

It is found in the cell membrane. Its pathway is plant hormone biosynthesis; brassinosteroid biosynthesis. Its function is as follows. Catalyzes the C23-alpha-hydroxylation step in brassinosteroid biosynthesis. Converts 6-deoxocathasterone to 6-deoxoteasterone in the late C6-oxidation pathway and cathasterone to teasterone (TE) in the early C6-oxidation pathway of brassinolide (BL) biosynthesis. This chain is Cytochrome P450 90A4, found in Oryza sativa subsp. japonica (Rice).